A 561-amino-acid chain; its full sequence is Mercuric reductase (561 aa).

One can recognise an HMA domain in the interval 1–65; the sequence is MTTLKITGMT…AVAGLGYEAT (65 aa). Residues cysteine 11 and cysteine 14 each contribute to the a metal cation site. FAD contacts are provided by alanine 110, glycine 130, and threonine 135. Cysteine 136 and cysteine 141 are joined by a disulfide. The FAD site is built by lysine 145, alanine 211, aspartate 403, and valine 411. Hg(2+) is bound by residues cysteine 558 and cysteine 559.

Belongs to the class-I pyridine nucleotide-disulfide oxidoreductase family. Homodimer. Requires FAD as cofactor.

It catalyses the reaction Hg + NADP(+) + H(+) = Hg(2+) + NADPH. Resistance to Hg(2+) in bacteria appears to be governed by a specialized system which includes mercuric reductase. MerA protein is responsible for volatilizing mercury as Hg(0). This Acinetobacter calcoaceticus protein is Mercuric reductase (merA).